The sequence spans 511 residues: Immunoglobulin-binding protein EibD (511 aa).

An N-terminal signal peptide occupies residues 1–26 (MSKKFTMTLLSSSLAGLLVMSGGVSA). The segment at 27–417 (QNGTYSVLQD…SKAIAANTRT (391 aa)) is surface exposed passenger domain. The Extracellular portion of the chain corresponds to 27–460 (QNGTYSVLQD…GLFQPYSVGK (434 aa)). Residues 161-287 (DAKASGEFSV…TGTESDKTYG (127 aa)) are head domain. Residues 288–303 (TRVLGGLSDGTRNSDA) form a neck region. Residues 304–349 (ATVGQLNRKVGGVYDDVKARITVESEKQKKYTDQKTSEVNEKVEAR) are right-handed coiled-coil (RHcc). Positions 304–349 (ATVGQLNRKVGGVYDDVKARITVESEKQKKYTDQKTSEVNEKVEAR) form a coiled coil. Positions 329–344 (EKQKKYTDQKTSEVNE) are required to bind IgA. The segment at 350 to 375 (TTVGVDSDGKLTRAEGATKTIAVNDG) is saddle domain. The stretch at 376 to 441 (LVALSGRTDR…INENHKEMKR (66 aa)) forms a coiled coil. The left-handed coiled-coil (LHcc) stretch occupies residues 376-441 (LVALSGRTDR…INENHKEMKR (66 aa)). The interval 384–418 (DRIDYAVGAIDGRVTRNTQSIEKNSKAIAANTRTL) is required to bind IgG. The interval 418 to 460 (LQQHSARLDSQQRQINENHKEMKRAAAQSAALTGLFQPYSVGK) is outer membrane translocation of the passenger domain. A run of 4 beta stranded transmembrane segments spans residues 461–471 (FNATAAVGGYS), 474–485 (QALAVGVGYRFN), 488–497 (TAAKAGVAFS), and 501–511 (ASWNVGVNFEF). The segment at 461-511 (FNATAAVGGYSDQQALAVGVGYRFNEQTAAKAGVAFSDGDASWNVGVNFEF) is translocator domain.

This sequence belongs to the autotransporter-2 (AT-2) (TC 1.B.40) family. Eib subfamily. As to quaternary structure, homotrimer; can probably form mixed heterotrimers in vivo. Will form mixed heterotrimers with EibA or EibC; these are correctly located in the outer membrane and bind IgG Fc, although less well than homotrimers. In denaturing gels runs as a band of about 210 kDa. Binds the Fc portion of immunoglobulins; binds more than 1 Fc per subunit, can be modeled to bind 3 Fc per trimer.

The protein resides in the cell surface. It localises to the cell outer membrane. Binds (in a non-immune fashion) to the Fc portion of human IgA and IgG; binding occurs on the cell surface. Confers the ability to survive exposure to human serum exposure. Binds to the Fc portion of human IgG, IgA and to whole mouse antibodies also via Fc. Upon overexpression cells acquire an extra cell surface layer that forms a zipper-like contact between cells; cells autoagglutinate and form biofilm more readily, suggesting it may play a role in defense against a host. The chain is Immunoglobulin-binding protein EibD from Escherichia coli.